The following is an 84-amino-acid chain: UPF0473 protein CPF_2030 (84 aa).

This sequence belongs to the UPF0473 family.

This is UPF0473 protein CPF_2030 from Clostridium perfringens (strain ATCC 13124 / DSM 756 / JCM 1290 / NCIMB 6125 / NCTC 8237 / Type A).